Consider the following 273-residue polypeptide: Orotidine 5'-phosphate decarboxylase (273 aa).

The active-site Proton donor is the K96.

Belongs to the OMP decarboxylase family. Type 2 subfamily.

It catalyses the reaction orotidine 5'-phosphate + H(+) = UMP + CO2. It functions in the pathway pyrimidine metabolism; UMP biosynthesis via de novo pathway; UMP from orotate: step 2/2. This chain is Orotidine 5'-phosphate decarboxylase, found in Flavobacterium johnsoniae (strain ATCC 17061 / DSM 2064 / JCM 8514 / BCRC 14874 / CCUG 350202 / NBRC 14942 / NCIMB 11054 / UW101) (Cytophaga johnsonae).